Reading from the N-terminus, the 297-residue chain is GTPase Era (297 aa).

The region spanning Arg-7–Ala-174 is the Era-type G domain. The interval Gly-15–Ser-22 is G1. A GTP-binding site is contributed by Gly-15 to Ser-22. A G2 region spans residues Gln-41–Asn-45. Residues Asp-62–Gly-65 form a G3 region. GTP-binding positions include Asp-62–Ile-66 and Asn-124–Asp-127. Residues Asn-124–Asp-127 form a G4 region. The G5 stretch occupies residues Val-153 to Ala-155. One can recognise a KH type-2 domain in the interval Thr-205 to Lys-282.

It belongs to the TRAFAC class TrmE-Era-EngA-EngB-Septin-like GTPase superfamily. Era GTPase family. Monomer.

It is found in the cytoplasm. It localises to the cell inner membrane. Functionally, an essential GTPase that binds both GDP and GTP, with rapid nucleotide exchange. Plays a role in 16S rRNA processing and 30S ribosomal subunit biogenesis and possibly also in cell cycle regulation and energy metabolism. The polypeptide is GTPase Era (Geotalea uraniireducens (strain Rf4) (Geobacter uraniireducens)).